A 328-amino-acid chain; its full sequence is Transcription initiation factor IIB 4 (328 aa).

2 stretches are compositionally biased toward basic and acidic residues: residues 1 to 12 (MTNQRTTRDGSH) and 21 to 32 (RSRESTDEDHGC). The tract at residues 1–47 (MTNQRTTRDGSHGTESVPTQRSRESTDEDHGCPECNGDLVTDEDRGE) is disordered. Residues 28-58 (EDHGCPECNGDLVTDEDRGETTCGECGLVVE) form a TFIIB-type zinc finger. Zn(2+) contacts are provided by Cys-32, Cys-35, Cys-50, and Cys-53. 2 tandem repeats follow at residues 144–227 (GEIE…AREL) and 238–319 (SYVP…EILD).

It belongs to the TFIIB family.

In terms of biological role, stabilizes TBP binding to an archaeal box-A promoter. Also responsible for recruiting RNA polymerase II to the pre-initiation complex (DNA-TBP-TFIIB). The sequence is that of Transcription initiation factor IIB 4 from Halobacterium salinarum (strain ATCC 700922 / JCM 11081 / NRC-1) (Halobacterium halobium).